The sequence spans 342 residues: N-acetyl-gamma-glutamyl-phosphate reductase (342 aa).

C147 is an active-site residue.

The protein belongs to the NAGSA dehydrogenase family. Type 1 subfamily.

Its subcellular location is the cytoplasm. It catalyses the reaction N-acetyl-L-glutamate 5-semialdehyde + phosphate + NADP(+) = N-acetyl-L-glutamyl 5-phosphate + NADPH + H(+). It functions in the pathway amino-acid biosynthesis; L-arginine biosynthesis; N(2)-acetyl-L-ornithine from L-glutamate: step 3/4. Catalyzes the NADPH-dependent reduction of N-acetyl-5-glutamyl phosphate to yield N-acetyl-L-glutamate 5-semialdehyde. The sequence is that of N-acetyl-gamma-glutamyl-phosphate reductase from Campylobacter jejuni (strain RM1221).